A 513-amino-acid polypeptide reads, in one-letter code: ATP synthase subunit alpha (513 aa).

Residue Gly169–Thr176 coordinates ATP.

This sequence belongs to the ATPase alpha/beta chains family. As to quaternary structure, F-type ATPases have 2 components, CF(1) - the catalytic core - and CF(0) - the membrane proton channel. CF(1) has five subunits: alpha(3), beta(3), gamma(1), delta(1), epsilon(1). CF(0) has three main subunits: a(1), b(2) and c(9-12). The alpha and beta chains form an alternating ring which encloses part of the gamma chain. CF(1) is attached to CF(0) by a central stalk formed by the gamma and epsilon chains, while a peripheral stalk is formed by the delta and b chains.

The protein localises to the cell inner membrane. It carries out the reaction ATP + H2O + 4 H(+)(in) = ADP + phosphate + 5 H(+)(out). Functionally, produces ATP from ADP in the presence of a proton gradient across the membrane. The alpha chain is a regulatory subunit. The sequence is that of ATP synthase subunit alpha from Aeromonas salmonicida (strain A449).